A 213-amino-acid chain; its full sequence is N-(5'-phosphoribosyl)anthranilate isomerase (213 aa).

Belongs to the TrpF family.

The catalysed reaction is N-(5-phospho-beta-D-ribosyl)anthranilate = 1-(2-carboxyphenylamino)-1-deoxy-D-ribulose 5-phosphate. It participates in amino-acid biosynthesis; L-tryptophan biosynthesis; L-tryptophan from chorismate: step 3/5. The polypeptide is N-(5'-phosphoribosyl)anthranilate isomerase (Methylibium petroleiphilum (strain ATCC BAA-1232 / LMG 22953 / PM1)).